Here is a 419-residue protein sequence, read N- to C-terminus: 4-hydroxyphenylpyruvate dioxygenase (419 aa).

2 consecutive VOC domains span residues 37–185 (GYDH…LLSR) and 216–376 (RIDH…LFTR). The Fe cation site is built by His219, His302, and Glu387.

This sequence belongs to the 4HPPD family. It depends on Fe cation as a cofactor.

It carries out the reaction 3-(4-hydroxyphenyl)pyruvate + O2 = homogentisate + CO2. Its pathway is amino-acid degradation; L-phenylalanine degradation; acetoacetate and fumarate from L-phenylalanine: step 3/6. This chain is 4-hydroxyphenylpyruvate dioxygenase (HPD4), found in Pyricularia oryzae (strain 70-15 / ATCC MYA-4617 / FGSC 8958) (Rice blast fungus).